The chain runs to 396 residues: Dimethyladenosine transferase 2, mitochondrial (396 aa).

A mitochondrion-targeting transit peptide spans 1–19 (MWIPVVGLPRRLRLSALAG). The segment at 44–64 (LSDSSPQLWPEPDFRNPPRKA) is disordered. S-adenosyl-L-methionine-binding residues include V75, E124, and D150. The segment at 330-331 (RR) is DNA-binding.

Belongs to the class I-like SAM-binding methyltransferase superfamily. rRNA adenine N(6)-methyltransferase family. KsgA subfamily. Homodimer. Component of the mitochondrial transcription initiation complex, composed at least of TFB2M, TFAM and POLRMT. In this complex TFAM recruits POLRMT to the promoter whereas TFB2M induces structural changes in POLRMT to enable promoter opening and trapping of the DNA non-template strand. Interacts with mitochondrial RNA polymerase POLRMT. Interacts with TFAM. As to expression, ubiquitously expressed.

Its subcellular location is the mitochondrion. The enzyme catalyses adenosine in rRNA + S-adenosyl-L-methionine = N(6)-methyladenosine in rRNA + S-adenosyl-L-homocysteine + H(+). Functionally, S-adenosyl-L-methionine-dependent rRNA methyltransferase which may methylate two specific adjacent adenosines in the loop of a conserved hairpin near the 3'-end of 12S mitochondrial rRNA. Component of the mitochondrial transcription initiation complex, composed at least of TFB2M, TFAM and POLRMT that is required for basal transcription of mitochondrial DNA. In this complex, TFAM recruits POLRMT to a specific promoter whereas TFB2M induces structural changes in POLRMT to enable promoter opening and trapping of the DNA non-template strand. Stimulates transcription independently of the methyltransferase activity. The chain is Dimethyladenosine transferase 2, mitochondrial from Homo sapiens (Human).